We begin with the raw amino-acid sequence, 241 residues long: Phosphoribosylformylglycinamidine synthase subunit PurQ (241 aa).

The 236-residue stretch at 6–241 (NVGIVVFPGS…QSLLLASAFA (236 aa)) folds into the Glutamine amidotransferase type-1 domain. Cysteine 90 acts as the Nucleophile in catalysis. Active-site residues include histidine 207 and glutamate 209.

As to quaternary structure, part of the FGAM synthase complex composed of 1 PurL, 1 PurQ and 2 PurS subunits.

It localises to the cytoplasm. The catalysed reaction is N(2)-formyl-N(1)-(5-phospho-beta-D-ribosyl)glycinamide + L-glutamine + ATP + H2O = 2-formamido-N(1)-(5-O-phospho-beta-D-ribosyl)acetamidine + L-glutamate + ADP + phosphate + H(+). It catalyses the reaction L-glutamine + H2O = L-glutamate + NH4(+). It functions in the pathway purine metabolism; IMP biosynthesis via de novo pathway; 5-amino-1-(5-phospho-D-ribosyl)imidazole from N(2)-formyl-N(1)-(5-phospho-D-ribosyl)glycinamide: step 1/2. Functionally, part of the phosphoribosylformylglycinamidine synthase complex involved in the purines biosynthetic pathway. Catalyzes the ATP-dependent conversion of formylglycinamide ribonucleotide (FGAR) and glutamine to yield formylglycinamidine ribonucleotide (FGAM) and glutamate. The FGAM synthase complex is composed of three subunits. PurQ produces an ammonia molecule by converting glutamine to glutamate. PurL transfers the ammonia molecule to FGAR to form FGAM in an ATP-dependent manner. PurS interacts with PurQ and PurL and is thought to assist in the transfer of the ammonia molecule from PurQ to PurL. This Thermosynechococcus vestitus (strain NIES-2133 / IAM M-273 / BP-1) protein is Phosphoribosylformylglycinamidine synthase subunit PurQ.